Here is a 90-residue protein sequence, read N- to C-terminus: Serine protease inhibitor kazal-like protein, minor form (90 aa).

The first 23 residues, 1 to 23 (MSSTWIKFLFILTLVLLPYSVFS), serve as a signal peptide directing secretion. In terms of domain architecture, Kazal-like spans 33–89 (VIKEPNCTMYKSKSECSNIAENPVCADDRNTYYNECYFCIEKVVEKLKYRYHGICIY). A glycan (N-linked (GlcNAc...) asparagine) is linked at asparagine 38.

In terms of tissue distribution, luminal fluid and mucosal folds of the seminal vesicles (at protein level). Not detected in brain, heart, lung, liver, kidney, stomach, small intestine, muscle, skin, thymus, placenta or bladder.

The protein localises to the secreted. Does not function as an inhibitor of trypsin, chymotrypsin, subtilisin or elastase. Binds sperm and enhances sperm motility. May act as a decapacitation factor, suppresses BSA-stimulated sperm capacitation and blocks sperm-oocyte interactions in vitro. This Mus musculus (Mouse) protein is Serine protease inhibitor kazal-like protein, minor form (Spinkl).